The sequence spans 533 residues: Tryptophan N-monooxygenase CYP79A68 (533 aa).

A helical membrane pass occupies residues 12 to 32; it reads VTPPISLSLAFIIFMFLVKFI. Asn-209 carries N-linked (GlcNAc...) asparagine glycosylation. Cys-471 serves as a coordination point for heme.

This sequence belongs to the cytochrome P450 family. The cofactor is heme. In terms of tissue distribution, confined to buds.

Its subcellular location is the membrane. The enzyme catalyses L-tryptophan + 2 reduced [NADPH--hemoprotein reductase] + 2 O2 = (E)-(indol-3-yl)acetaldehyde oxime + 2 oxidized [NADPH--hemoprotein reductase] + CO2 + 3 H2O + 2 H(+). In terms of biological role, catalyzes with low efficiency E and Z isomers of indole-3-acetaldoxime from tryptophan (Trp). The chain is Tryptophan N-monooxygenase CYP79A68 from Prunus mume (Japanese apricot).